We begin with the raw amino-acid sequence, 282 residues long: Epoxide hydrolase LasB (282 aa).

The interval 1 to 133 is lsd19A; it reads MPAETVRKEV…TDSSWTARPA (133 aa). A substrate-binding site is contributed by Tyr-14. The active-site Proton acceptor; for 5-exo epoxide-opening cyclization activity is Asp-38. Substrate-binding residues include Glu-65 and His-146. Residues 134–282 form a lsd19B region; that stretch reads PDEERRKELA…TDVSLLDPAA (149 aa). The active-site Proton acceptor; for 6-endo epoxide-opening cyclization activity is the Asp-170. Arg-177, Glu-197, and Tyr-251 together coordinate substrate.

Epoxide hydrolase responsible for the double epoxide-opening cyclization of bisepoxyprelasalocid A to form lasalocid A, a polyether antibiotic. In vitro, accepts various substrate analogs differing in the left segment of lasalocid and epoxide stereochemistry to afford products with excellent regioselectivity. In Streptomyces lasalocidi (Streptomyces lasaliensis), this protein is Epoxide hydrolase LasB (lsd19).